The primary structure comprises 390 residues: Elongation factor Ts 2, mitochondrial (390 aa).

The transit peptide at 1–24 directs the protein to the mitochondrion; that stretch reads MMIFSTAVLRLCATSRIGAVTKRA. The segment covering 30–40 has biased composition (low complexity); it reads SSASSSSSSSS. Residues 30 to 54 form a disordered region; the sequence is SSASSSSSSSSPTQSMPPQRYTHHQ.

Belongs to the EF-Ts family.

The protein localises to the mitochondrion. In terms of biological role, associates with the EF-Tu.GDP complex and induces the exchange of GDP to GTP. It remains bound to the aminoacyl-tRNA.EF-Tu.GTP complex up to the GTP hydrolysis stage on the ribosome. This is Elongation factor Ts 2, mitochondrial from Thalassiosira pseudonana (Marine diatom).